Consider the following 238-residue polypeptide: Zinc-finger homeodomain protein 11 (238 aa).

The ZF-HD dimerization-type; degenerate zinc-finger motif lies at 12–59 (YRECMRNHAAKLGTYANDGCCEYTPDDGHPAGLLCAACGCHRNFHRKD). The segment at residues 119-188 (RRRTRTKFTE…NHKAGGGGGG (70 aa)) is a DNA-binding region (homeobox). The segment covering 183 to 200 (GGGGGGGGSGGPGAGGGA) has biased composition (gly residues). Residues 183–238 (GGGGGGGGSGGPGAGGGAQTSSSTTRGGGDVGVGLSPAMGGDGEDDEEVRGSEMCM) form a disordered region.

Homo- and heterodimer with other ZFHD proteins.

It is found in the nucleus. In terms of biological role, putative transcription factor. This is Zinc-finger homeodomain protein 11 (ZHD11) from Oryza sativa subsp. indica (Rice).